The following is a 404-amino-acid chain: MKLPIYLDYSATTPVDPRVAEKMMQFLTLDGTFGNPASRSHRFGWQAEEAVDIARNQIAELVGADPREIVFTSGATESDNLAIKGAANFYQKKGKHIITSKTEHKAVLDTCRQLEREGFEVTYLAPQRNGIIDLNELEAAMRDDTILVSIMHVNNEIGVVQDIATIGEMCRARGIIYHVDATQSVGKLPIDLSQLKVDLMSFSGHKIYGPKGIGALYVRRKPRIRIEAQMHGGGHERGMRSGTLPVHQIVGMGEAYRIAKEEMETEMARLRGLRNRLWNGIKDIEEVYLNGDLEQGAPNILNVSFNYVEGESLIMALKDLAVSSGSACTSASLEPSYVLRALGMNDELAHSSIRFSLGRFTTEEEIDYAIDLVRKSIGRLRDLSPLWEMYKQGVDLNSIEWAHH.

Residues 75–76 (AT), Asn-155, Gln-183, and 203–205 (SGH) each bind pyridoxal 5'-phosphate. Lys-206 is subject to N6-(pyridoxal phosphate)lysine. Thr-243 lines the pyridoxal 5'-phosphate pocket. Cys-328 serves as the catalytic Cysteine persulfide intermediate. Cys-328 is a [2Fe-2S] cluster binding site.

It belongs to the class-V pyridoxal-phosphate-dependent aminotransferase family. NifS/IscS subfamily. Homodimer. Forms a heterotetramer with IscU, interacts with other sulfur acceptors. The cofactor is pyridoxal 5'-phosphate.

The protein resides in the cytoplasm. The enzyme catalyses (sulfur carrier)-H + L-cysteine = (sulfur carrier)-SH + L-alanine. It functions in the pathway cofactor biosynthesis; iron-sulfur cluster biosynthesis. Master enzyme that delivers sulfur to a number of partners involved in Fe-S cluster assembly, tRNA modification or cofactor biosynthesis. Catalyzes the removal of elemental sulfur and selenium atoms from cysteine and selenocysteine to produce alanine. Functions as a sulfur delivery protein for Fe-S cluster synthesis onto IscU, an Fe-S scaffold assembly protein, as well as other S acceptor proteins. Also functions as a selenium delivery protein in the pathway for the biosynthesis of selenophosphate. This is Cysteine desulfurase IscS from Salmonella schwarzengrund (strain CVM19633).